A 316-amino-acid polypeptide reads, in one-letter code: Mitochondrial distribution and morphology protein 12 (316 aa).

An SMP-LTD domain is found at 1–312 (MSIDLEWNGL…FPNFHTLVLG (312 aa)).

Belongs to the MDM12 family. In terms of assembly, component of the ER-mitochondria encounter structure (ERMES) or MDM complex, composed of MMM1, MDM10, MDM12 and MDM34. An MMM1 homodimer associates with one molecule of MDM12 on each side in a pairwise head-to-tail manner, and the SMP-LTD domains of MMM1 and MDM12 generate a continuous hydrophobic tunnel for phospholipid trafficking.

It is found in the mitochondrion outer membrane. It localises to the endoplasmic reticulum membrane. Functionally, component of the ERMES/MDM complex, which serves as a molecular tether to connect the endoplasmic reticulum (ER) and mitochondria. Components of this complex are involved in the control of mitochondrial shape and protein biogenesis, and function in nonvesicular lipid trafficking between the ER and mitochondria. MDM12 is required for the interaction of the ER-resident membrane protein MMM1 and the outer mitochondrial membrane-resident beta-barrel protein MDM10. The MDM12-MMM1 subcomplex functions in the major beta-barrel assembly pathway that is responsible for biogenesis of all mitochondrial outer membrane beta-barrel proteins, and acts in a late step after the SAM complex. The MDM10-MDM12-MMM1 subcomplex further acts in the TOM40-specific pathway after the action of the MDM12-MMM1 complex. Essential for establishing and maintaining the structure of mitochondria and maintenance of mtDNA nucleoids. This is Mitochondrial distribution and morphology protein 12 from Postia placenta (strain ATCC 44394 / Madison 698-R) (Brown rot fungus).